A 438-amino-acid chain; its full sequence is MTVPVNATNLRIPLDTGRDREFLDSWAELEAIGATPAGGVERQAGTAEDGQMRDWLSRWLRTRGFSVEVDPIGNLFGLLEFNPGAPYVLVGSHLDSQPRGGRFDGAYGVLAGAVAADRTRRYVTRSGFTPRYNVAVVDWFNEEGSRFKPSMMGSAVFTGTLDLEEALNTTDDDGVSVRDALAAINGIGDREVFSSTGPRQLAAYAEIHIEQGRELEKNNVTIGLVDRTWAANKYELNVVGIQGHTGATAIEDRQDALLGAALIVVALRDIADEFGEELHTSCGQLTVLPNSPVVVPREVHMHLDLRSDNDELLAAADAALRRRIAEAEIRAGVKVEHRKAHVWPGHHYQPQGVELARDAANDLGISSMLVQTRAGHDSTNMKEIVPSVMLFVPSVEGISHAEAEYTSDEDLCSGVDLLTEVVARMLDGSLDAAGAGHP.

Positions 95, 104, 143, and 208 each coordinate Zn(2+). Residue lysine 217 forms an Isoglutamyl lysine isopeptide (Lys-Gln) (interchain with Q-Cter in protein Pup) linkage. A Zn(2+)-binding site is contributed by histidine 400.

The protein belongs to the peptidase M20 family. It depends on Zn(2+) as a cofactor.

This is Putative hydrolase MSMEG_3995/MSMEI_3903 from Mycolicibacterium smegmatis (strain ATCC 700084 / mc(2)155) (Mycobacterium smegmatis).